The chain runs to 527 residues: Light-independent protochlorophyllide reductase subunit B (527 aa).

A [4Fe-4S] cluster-binding site is contributed by D36. D292 serves as the catalytic Proton donor. Residue 428-429 (GL) participates in substrate binding.

This sequence belongs to the ChlB/BchB/BchZ family. In terms of assembly, protochlorophyllide reductase is composed of three subunits; BchL, BchN and BchB. Forms a heterotetramer of two BchB and two BchN subunits. [4Fe-4S] cluster is required as a cofactor.

The catalysed reaction is chlorophyllide a + oxidized 2[4Fe-4S]-[ferredoxin] + 2 ADP + 2 phosphate = protochlorophyllide a + reduced 2[4Fe-4S]-[ferredoxin] + 2 ATP + 2 H2O. Its pathway is porphyrin-containing compound metabolism; bacteriochlorophyll biosynthesis (light-independent). Its function is as follows. Component of the dark-operative protochlorophyllide reductase (DPOR) that uses Mg-ATP and reduced ferredoxin to reduce ring D of protochlorophyllide (Pchlide) to form chlorophyllide a (Chlide). This reaction is light-independent. The NB-protein (BchN-BchB) is the catalytic component of the complex. The chain is Light-independent protochlorophyllide reductase subunit B from Chlorobium phaeovibrioides (strain DSM 265 / 1930) (Prosthecochloris vibrioformis (strain DSM 265)).